A 268-amino-acid chain; its full sequence is Interleukin-1 beta (268 aa).

The propeptide occupies 1 to 115; the sequence is MAAVPDTSDM…DNWDEGYVCD (115 aa).

Belongs to the IL-1 family. In terms of assembly, monomer. In its precursor form, weakly interacts with full-length MEFV; the mature cytokine does not interact at all. Interacts with integrins ITGAV:ITGBV and ITGA5:ITGB1; integrin-binding is required for IL1B signaling. Interacts with cargo receptor TMED10; the interaction is direct and is required for the secretion of IL1B mature form. Interacts with HSP90AB1; the interaction facilitates cargo translocation into the ERGIC. Interacts with HSP90B1; the interaction facilitates cargo translocation into the ERGIC.

The protein resides in the cytoplasm. Its subcellular location is the cytosol. It localises to the secreted. It is found in the lysosome. The protein localises to the extracellular exosome. Potent pro-inflammatory cytokine. Initially discovered as the major endogenous pyrogen, induces prostaglandin synthesis, neutrophil influx and activation, T-cell activation and cytokine production, B-cell activation and antibody production, and fibroblast proliferation and collagen production. Promotes Th17 differentiation of T-cells. Synergizes with IL12/interleukin-12 to induce IFNG synthesis from T-helper 1 (Th1) cells. Plays a role in angiogenesis by inducing VEGF production synergistically with TNF and IL6. Involved in transduction of inflammation downstream of pyroptosis: its mature form is specifically released in the extracellular milieu by passing through the gasdermin-D (GSDMD) pore. This Equus caballus (Horse) protein is Interleukin-1 beta (IL1B).